Consider the following 442-residue polypeptide: Probable carboxypeptidase PAAG_00768 (442 aa).

Residues 1-20 form the signal peptide; the sequence is MKLQYLVALLFVQAVPPVTA. N-linked (GlcNAc...) asparagine glycosylation occurs at N102. D160 is a binding site for Zn(2+). Catalysis depends on E192, which acts as the Proton acceptor. E193 is a Zn(2+) binding site. Residue N343 is glycosylated (N-linked (GlcNAc...) asparagine).

The protein belongs to the peptidase M20A family. Requires Zn(2+) as cofactor.

It is found in the secreted. This Paracoccidioides lutzii (strain ATCC MYA-826 / Pb01) (Paracoccidioides brasiliensis) protein is Probable carboxypeptidase PAAG_00768.